The sequence spans 227 residues: Germin-like protein subfamily T member 3 (227 aa).

The N-terminal stretch at 1-26 (MAHISQISSFLSIVLIFLALCITLFT) is a signal peptide. Residues Cys44 and Cys59 are joined by a disulfide bond. A Cupin type-1 domain is found at 71–219 (SGLNTPLNTS…AFKADSKTIN (149 aa)). Asn78 is a glycosylation site (N-linked (GlcNAc...) asparagine). The Mn(2+) site is built by His119, His121, and Glu126. Asn143 carries an N-linked (GlcNAc...) asparagine glycan. Position 165 (His165) interacts with Mn(2+).

The protein belongs to the germin family. As to quaternary structure, oligomer (believed to be a pentamer but probably hexamer).

Its subcellular location is the secreted. The protein localises to the extracellular space. It is found in the apoplast. Functionally, may play a role in plant defense. Probably has no oxalate oxidase activity even if the active site is conserved. This chain is Germin-like protein subfamily T member 3, found in Arabidopsis thaliana (Mouse-ear cress).